The following is a 240-amino-acid chain: Uridylate kinase (240 aa).

Residue 12 to 15 (KLSG) participates in ATP binding. The segment at 20-25 (GDQGYG) is involved in allosteric activation by GTP. G54 lines the UMP pocket. ATP contacts are provided by G55 and R59. UMP-binding positions include D74 and 135-142 (TGNPYFST). ATP-binding residues include N163, Y169, and D172.

Belongs to the UMP kinase family. Homohexamer.

It localises to the cytoplasm. The catalysed reaction is UMP + ATP = UDP + ADP. It functions in the pathway pyrimidine metabolism; CTP biosynthesis via de novo pathway; UDP from UMP (UMPK route): step 1/1. Allosterically activated by GTP. Inhibited by UTP. In terms of biological role, catalyzes the reversible phosphorylation of UMP to UDP. In Oceanobacillus iheyensis (strain DSM 14371 / CIP 107618 / JCM 11309 / KCTC 3954 / HTE831), this protein is Uridylate kinase.